We begin with the raw amino-acid sequence, 123 residues long: Large ribosomal subunit protein bL12 (123 aa).

It belongs to the bacterial ribosomal protein bL12 family. In terms of assembly, homodimer. Part of the ribosomal stalk of the 50S ribosomal subunit. Forms a multimeric L10(L12)X complex, where L10 forms an elongated spine to which 2 to 4 L12 dimers bind in a sequential fashion. Binds GTP-bound translation factors.

Its function is as follows. Forms part of the ribosomal stalk which helps the ribosome interact with GTP-bound translation factors. Is thus essential for accurate translation. The chain is Large ribosomal subunit protein bL12 from Bacillus licheniformis (strain ATCC 14580 / DSM 13 / JCM 2505 / CCUG 7422 / NBRC 12200 / NCIMB 9375 / NCTC 10341 / NRRL NRS-1264 / Gibson 46).